The primary structure comprises 370 residues: Histidinol-phosphate aminotransferase 1 (370 aa).

Lys-222 carries the N6-(pyridoxal phosphate)lysine modification.

This sequence belongs to the class-II pyridoxal-phosphate-dependent aminotransferase family. Histidinol-phosphate aminotransferase subfamily. In terms of assembly, homodimer. Pyridoxal 5'-phosphate serves as cofactor.

The enzyme catalyses L-histidinol phosphate + 2-oxoglutarate = 3-(imidazol-4-yl)-2-oxopropyl phosphate + L-glutamate. Its pathway is amino-acid biosynthesis; L-histidine biosynthesis; L-histidine from 5-phospho-alpha-D-ribose 1-diphosphate: step 7/9. This chain is Histidinol-phosphate aminotransferase 1, found in Bacillus cereus (strain ZK / E33L).